A 417-amino-acid chain; its full sequence is Probable glucuronosyltransferase Os01g0926700 (417 aa).

Residues 1 to 3 lie on the Cytoplasmic side of the membrane; the sequence is MRR. The helical; Signal-anchor for type II membrane protein transmembrane segment at 4–24 threads the bilayer; sequence WVLAIAILAAAVCFFLGAQAQ. The Lumenal portion of the chain corresponds to 25–417; sequence EVRQGHQTER…AGPVGDLKPW (393 aa). N-linked (GlcNAc...) asparagine glycosylation is found at Asn-144 and Asn-405.

This sequence belongs to the glycosyltransferase 47 family.

It localises to the golgi apparatus membrane. Functionally, involved in the synthesis of glucuronoxylan hemicellulose in secondary cell walls. In Oryza sativa subsp. japonica (Rice), this protein is Probable glucuronosyltransferase Os01g0926700.